Here is a 76-residue protein sequence, read N- to C-terminus: Defensin-like protein 122 (76 aa).

Residues 1 to 25 form the signal peptide; that stretch reads MSKTTVIAIFMVVLVLGLVTKETQG. 4 disulfides stabilise this stretch: cysteine 29-cysteine 74, cysteine 39-cysteine 60, cysteine 44-cysteine 68, and cysteine 48-cysteine 70.

The protein belongs to the DEFL family. In terms of tissue distribution, expressed in flower buds, but not in stems, roots or rosette leaves.

It localises to the secreted. The chain is Defensin-like protein 122 (LCR30) from Arabidopsis thaliana (Mouse-ear cress).